Consider the following 20-residue polypeptide: Cathepsin L-like cysteine proteinase (20 aa).

Belongs to the peptidase C1 family.

Its subcellular location is the lysosome. Functionally, thiol protease. The chain is Cathepsin L-like cysteine proteinase from Fasciola hepatica (Liver fluke).